The chain runs to 242 residues: Ribosomal RNA small subunit methyltransferase G (242 aa).

S-adenosyl-L-methionine contacts are provided by residues Gly-78, Leu-83, 130-131, and Arg-151; that span reads AE.

This sequence belongs to the methyltransferase superfamily. RNA methyltransferase RsmG family.

The protein localises to the cytoplasm. Functionally, specifically methylates the N7 position of guanine in position 518 of 16S rRNA. This is Ribosomal RNA small subunit methyltransferase G from Salinispora tropica (strain ATCC BAA-916 / DSM 44818 / JCM 13857 / NBRC 105044 / CNB-440).